Consider the following 127-residue polypeptide: Protein FAM229A (127 aa).

A disordered region spans residues 1–96; sequence MLPSSTPGPG…ATEHNPVRPL (96 aa). Residues 24–39 show a composition bias toward low complexity; the sequence is RSPAARAPAAASSLGP.

It belongs to the FAM229 family.

The polypeptide is Protein FAM229A (FAM229A) (Homo sapiens (Human)).